The following is a 262-amino-acid chain: Histone chaperone cia1 (262 aa).

The interval 157–262 is disordered; it reads IQWDNPDFDD…KPEEKPETSQ (106 aa). 2 coiled-coil regions span residues 173–196 and 223–253; these read DADE…EGEG and KGSE…AEEK. 2 stretches are compositionally biased toward acidic residues: residues 173–219 and 226–242; these read DADE…GEGE and EEEE…EEES. The segment covering 250–262 has biased composition (basic and acidic residues); sequence AEEKPEEKPETSQ.

It belongs to the ASF1 family. In terms of assembly, interacts with histone H3 and histone H4.

It is found in the nucleus. Histone chaperone that facilitates histone deposition and histone exchange and removal during nucleosome assembly and disassembly. This Schizosaccharomyces pombe (strain 972 / ATCC 24843) (Fission yeast) protein is Histone chaperone cia1 (cia1).